The chain runs to 145 residues: Large ribosomal subunit protein bL9 (145 aa).

Belongs to the bacterial ribosomal protein bL9 family.

In terms of biological role, binds to the 23S rRNA. In Mesomycoplasma hyopneumoniae (strain J / ATCC 25934 / NCTC 10110) (Mycoplasma hyopneumoniae), this protein is Large ribosomal subunit protein bL9.